We begin with the raw amino-acid sequence, 232 residues long: Ubiquinone biosynthesis O-methyltransferase (232 aa).

Residues R36, G55, D76, and M120 each contribute to the S-adenosyl-L-methionine site.

This sequence belongs to the methyltransferase superfamily. UbiG/COQ3 family.

It catalyses the reaction a 3-demethylubiquinol + S-adenosyl-L-methionine = a ubiquinol + S-adenosyl-L-homocysteine + H(+). The catalysed reaction is a 3-(all-trans-polyprenyl)benzene-1,2-diol + S-adenosyl-L-methionine = a 2-methoxy-6-(all-trans-polyprenyl)phenol + S-adenosyl-L-homocysteine + H(+). Its pathway is cofactor biosynthesis; ubiquinone biosynthesis. O-methyltransferase that catalyzes the 2 O-methylation steps in the ubiquinone biosynthetic pathway. The protein is Ubiquinone biosynthesis O-methyltransferase of Burkholderia ambifaria (strain MC40-6).